A 600-amino-acid chain; its full sequence is Probable methyltransferase PMT21 (600 aa).

Topologically, residues Met1–Arg16 are cytoplasmic. A helical; Signal-anchor for type II membrane protein membrane pass occupies residues Ile17 to Leu37. The Lumenal segment spans residues Tyr38 to Asn600. A glycan (N-linked (GlcNAc...) asparagine) is linked at Asn594.

This sequence belongs to the methyltransferase superfamily.

It localises to the endoplasmic reticulum membrane. The polypeptide is Probable methyltransferase PMT21 (ERD3) (Arabidopsis thaliana (Mouse-ear cress)).